Here is a 425-residue protein sequence, read N- to C-terminus: Proline iminopeptidase (425 aa).

In terms of domain architecture, AB hydrolase-1 spans 52–315; sequence PWLLYLQGGP…EFPALAWAQG (264 aa). Ser-146 (nucleophile) is an active-site residue. Asp-351 is a catalytic residue. The active-site Proton donor is His-404.

It belongs to the peptidase S33 family. Homotetramer.

It localises to the cytoplasm. It catalyses the reaction Release of N-terminal proline from a peptide.. Its function is as follows. Higher activity toward long peptides. Acts on hydroxyproline beta-naphthylamide with almost as high an activity as on proline beta-naphthylamide. The polypeptide is Proline iminopeptidase (pip) (Aeromonas sobria).